The primary structure comprises 462 residues: 2-amino-5-chloromuconic acid deaminase (462 aa).

Residues Lys-79 and Ser-156 each act as charge relay system in the active site. The active-site Acyl-ester intermediate is the Ser-180.

The protein belongs to the amidase family.

The catalysed reaction is (2Z,4E)-2-aminomuconate + H2O = (3E)-2-oxohex-3-enedioate + NH4(+). It participates in xenobiotic degradation; nitrobenzene degradation. Its pathway is xenobiotic degradation; 4-chloronitrobenzene degradation. Its function is as follows. Involved in the biodegradation of nitroaromatic and chlorinated nitroaromatic compounds. Catalyzes the conversion of 2-amino-5-chloromuconic acid into 2-hydroxy-5-chloromuconic acid and ammonia. Also able to catalyze the transformation of 2-aminomuconic acid into 2-hydroxymuconic acid. The protein is 2-amino-5-chloromuconic acid deaminase of Comamonas testosteroni (Pseudomonas testosteroni).